An 80-amino-acid polypeptide reads, in one-letter code: Exodeoxyribonuclease 7 small subunit (80 aa).

It belongs to the XseB family. As to quaternary structure, heterooligomer composed of large and small subunits.

Its subcellular location is the cytoplasm. It catalyses the reaction Exonucleolytic cleavage in either 5'- to 3'- or 3'- to 5'-direction to yield nucleoside 5'-phosphates.. In terms of biological role, bidirectionally degrades single-stranded DNA into large acid-insoluble oligonucleotides, which are then degraded further into small acid-soluble oligonucleotides. This is Exodeoxyribonuclease 7 small subunit from Shigella sonnei (strain Ss046).